A 151-amino-acid chain; its full sequence is MSKELMVSKIERGTVIDHIPAGRALAVLRVLGITGREGVRVALVMNVESKKLGRKDIVKIEGRELTPEEVNIISAVAPTATINIVRDYTVVRKFKVSPPEVVKGRFRCKNPTCITNAPREPVEPTFLLVRREPPLFVCTYCGRYHELGDLL.

The Zn(2+) site is built by C108, C113, C138, and C141.

Belongs to the PyrI family. As to quaternary structure, contains catalytic and regulatory chains. Requires Zn(2+) as cofactor.

Functionally, involved in allosteric regulation of aspartate carbamoyltransferase. In Pyrobaculum neutrophilum (strain DSM 2338 / JCM 9278 / NBRC 100436 / V24Sta) (Thermoproteus neutrophilus), this protein is Aspartate carbamoyltransferase regulatory chain.